The following is a 229-amino-acid chain: B-cell antigen receptor complex-associated protein beta chain (229 aa).

The signal sequence occupies residues 1 to 28; it reads MARLALSPVPSHWMVALLLLLSAEPVPA. The Extracellular portion of the chain corresponds to 29 to 159; that stretch reads ARSEDRYRNP…QLKQRNTLKD (131 aa). The region spanning 38-138 is the Ig-like V-type domain; that stretch reads PKGSACSRIW…TSEVYQGCGT (101 aa). 2 disulfide bridges follow: C43-C126 and C65-C122. N73, N101, N127, and N128 each carry an N-linked (GlcNAc...) asparagine glycan. The chain crosses the membrane as a helical span at residues 160 to 180; that stretch reads GIIMIQTLLIILFIIVPIFLL. Residues 181–229 are Cytoplasmic-facing; it reads LDKDDSKAGMEEDHTYEGLDIDQTATYEDIVTLRTGEVKWSVGEHPGQE. In terms of domain architecture, ITAM spans 185 to 213; sequence DSKAGMEEDHTYEGLDIDQTATYEDIVTL. Phosphotyrosine; by SRC-type Tyr-kinases occurs at positions 196 and 207.

In terms of assembly, heterodimer of alpha and beta chains; disulfide-linked. Part of the B-cell antigen receptor complex where the alpha/beta chain heterodimer is non-covalently associated with an antigen-specific membrane-bound surface immunoglobulin of two heavy chains and two light chains. Interacts with LYN. Post-translationally, phosphorylated on tyrosine upon B-cell activation by SRC-type Tyr-kinases such as BLK, LYN and SYK. B-cells.

It localises to the cell membrane. Required in cooperation with CD79A for initiation of the signal transduction cascade activated by the B-cell antigen receptor complex (BCR) which leads to internalization of the complex, trafficking to late endosomes and antigen presentation. Enhances phosphorylation of CD79A, possibly by recruiting kinases which phosphorylate CD79A or by recruiting proteins which bind to CD79A and protect it from dephosphorylation. The chain is B-cell antigen receptor complex-associated protein beta chain (CD79B) from Homo sapiens (Human).